The chain runs to 219 residues: Histone H1.4 (219 aa).

Residues 1-15 show a composition bias toward low complexity; it reads MSETAPAAPAAPAPA. Residues 1 to 41 form a disordered region; the sequence is MSETAPAAPAAPAPAEKTPIKKKARKAAGGAKRKASGPPVS. Ser-2 carries the N-acetylserine modification. Phosphoserine is present on Ser-2. Position 17 is an N6-acetyllysine (Lys-17). Position 18 is a phosphothreonine (Thr-18). Positions 20-35 are enriched in basic residues; it reads IKKKARKAAGGAKRKA. N6-acetyllysine; alternate is present on Lys-26. An N6-methyllysine; alternate modification is found at Lys-26. Lys-34 carries the post-translational modification N6-(beta-hydroxybutyryl)lysine; alternate. Lys-34 bears the N6-succinyllysine; alternate mark. Phosphoserine is present on Ser-36. The H15 domain maps to 36-109; it reads SGPPVSELIT…GASGSFKLNK (74 aa). Lys-52 carries the post-translational modification N6-(beta-hydroxybutyryl)lysine. Residue Arg-54 is modified to Citrulline. 4 positions are modified to N6-(beta-hydroxybutyryl)lysine: Lys-64, Lys-85, Lys-90, and Lys-106. The disordered stretch occupies residues 92–219; that stretch reads TLVQTKGTGA…KPKKTAAKKK (128 aa). Positions 119–140 are enriched in basic residues; it reads KAKKAGAAKAKKPAGAAKKPKK. Thr-146 bears the Phosphothreonine mark. Basic residues-rich tracts occupy residues 149-160 and 168-185; these read KSTKKTPKKAKK and KKAK…KKAP. Ser-150 is subject to ADP-ribosylserine. Residue Ser-187 is modified to Phosphoserine. Over residues 192–219 the composition is skewed to basic residues; the sequence is RAVKPKAAKPKTSKPKAAKPKKTAAKKK.

The protein belongs to the histone H1/H5 family. Post-translationally, H1 histones are progressively phosphorylated during the cell cycle, becoming maximally phosphorylated during late G2 phase and M phase, and being dephosphorylated sharply thereafter. Acetylated at Lys-26. Deacetylated at Lys-26 by SIRT1. In terms of processing, citrullination at Arg-54 (H1R54ci) by PADI4 takes place within the DNA-binding site of H1 and results in its displacement from chromatin and global chromatin decondensation, thereby promoting pluripotency and stem cell maintenance. Post-translationally, ADP-ribosylated on Ser-150 in response to DNA damage.

The protein localises to the nucleus. It is found in the chromosome. Histone H1 protein binds to linker DNA between nucleosomes forming the macromolecular structure known as the chromatin fiber. Histones H1 are necessary for the condensation of nucleosome chains into higher-order structured fibers. Also acts as a regulator of individual gene transcription through chromatin remodeling, nucleosome spacing and DNA methylation. In Rattus norvegicus (Rat), this protein is Histone H1.4.